The primary structure comprises 185 residues: Ribosome-recycling factor (185 aa).

It belongs to the RRF family.

It is found in the cytoplasm. Functionally, responsible for the release of ribosomes from messenger RNA at the termination of protein biosynthesis. May increase the efficiency of translation by recycling ribosomes from one round of translation to another. The chain is Ribosome-recycling factor from Geotalea daltonii (strain DSM 22248 / JCM 15807 / FRC-32) (Geobacter daltonii).